The chain runs to 415 residues: Arginine biosynthesis bifunctional protein ArgJ (415 aa).

Substrate contacts are provided by Thr-156, Lys-182, Thr-193, Glu-279, Asn-410, and Thr-415. The Nucleophile role is filled by Thr-193.

It belongs to the ArgJ family. In terms of assembly, heterotetramer of two alpha and two beta chains.

It localises to the cytoplasm. The catalysed reaction is N(2)-acetyl-L-ornithine + L-glutamate = N-acetyl-L-glutamate + L-ornithine. The enzyme catalyses L-glutamate + acetyl-CoA = N-acetyl-L-glutamate + CoA + H(+). It functions in the pathway amino-acid biosynthesis; L-arginine biosynthesis; L-ornithine and N-acetyl-L-glutamate from L-glutamate and N(2)-acetyl-L-ornithine (cyclic): step 1/1. It participates in amino-acid biosynthesis; L-arginine biosynthesis; N(2)-acetyl-L-ornithine from L-glutamate: step 1/4. Functionally, catalyzes two activities which are involved in the cyclic version of arginine biosynthesis: the synthesis of N-acetylglutamate from glutamate and acetyl-CoA as the acetyl donor, and of ornithine by transacetylation between N(2)-acetylornithine and glutamate. This chain is Arginine biosynthesis bifunctional protein ArgJ, found in Synechococcus sp. (strain ATCC 27144 / PCC 6301 / SAUG 1402/1) (Anacystis nidulans).